The chain runs to 165 residues: UPF0303 protein BceJ2315_15790 (165 aa).

It belongs to the UPF0303 family.

This chain is UPF0303 protein BceJ2315_15790, found in Burkholderia cenocepacia (strain ATCC BAA-245 / DSM 16553 / LMG 16656 / NCTC 13227 / J2315 / CF5610) (Burkholderia cepacia (strain J2315)).